The chain runs to 1401 residues: DNA-directed RNA polymerase subunit beta' (1401 aa).

Positions 70, 72, 85, and 88 each coordinate Zn(2+). Mg(2+) is bound by residues aspartate 460, aspartate 462, and aspartate 464. 4 residues coordinate Zn(2+): cysteine 808, cysteine 882, cysteine 889, and cysteine 892.

The protein belongs to the RNA polymerase beta' chain family. As to quaternary structure, the RNAP catalytic core consists of 2 alpha, 1 beta, 1 beta' and 1 omega subunit. When a sigma factor is associated with the core the holoenzyme is formed, which can initiate transcription. It depends on Mg(2+) as a cofactor. The cofactor is Zn(2+).

It carries out the reaction RNA(n) + a ribonucleoside 5'-triphosphate = RNA(n+1) + diphosphate. DNA-dependent RNA polymerase catalyzes the transcription of DNA into RNA using the four ribonucleoside triphosphates as substrates. The polypeptide is DNA-directed RNA polymerase subunit beta' (Legionella pneumophila (strain Corby)).